The chain runs to 290 residues: Small ribosomal subunit protein bS6 (290 aa).

The segment at valine 208 to glycine 233 is disordered.

It belongs to the bacterial ribosomal protein bS6 family.

Functionally, binds together with bS18 to 16S ribosomal RNA. The polypeptide is Small ribosomal subunit protein bS6 (Mesoplasma florum (strain ATCC 33453 / NBRC 100688 / NCTC 11704 / L1) (Acholeplasma florum)).